Consider the following 128-residue polypeptide: Fluoride-specific ion channel FluC (128 aa).

A run of 4 helical transmembrane segments spans residues 1–21, 45–65, 70–90, and 99–119; these read MPER…GATA, LAGC…SLVS, LLLA…MYEI, and IFYS…CLYF. G78 and T81 together coordinate Na(+).

The protein belongs to the fluoride channel Fluc/FEX (TC 1.A.43) family.

It localises to the cell inner membrane. It carries out the reaction fluoride(in) = fluoride(out). With respect to regulation, na(+) is not transported, but it plays an essential structural role and its presence is essential for fluoride channel function. Fluoride-specific ion channel. Important for reducing fluoride concentration in the cell, thus reducing its toxicity. In Chlorobium phaeobacteroides (strain BS1), this protein is Fluoride-specific ion channel FluC.